Reading from the N-terminus, the 408-residue chain is Leucine aminopeptidase 1 (408 aa).

A signal peptide spans 1 to 16; sequence MKVSSAIALLLPVVAA. Positions 17-89 are excised as a propeptide; that stretch reads RFVDSAFEQD…SAQSATTGPA (73 aa). Asn95, Asn108, and Asn182 each carry an N-linked (GlcNAc...) asparagine glycan. The Zn(2+) site is built by His190, Asp209, Glu248, and Asp275. Residues Cys324 and Cys328 are joined by a disulfide bond. His357 serves as a coordination point for Zn(2+).

The protein belongs to the peptidase M28 family. M28E subfamily. As to quaternary structure, monomer. Requires Zn(2+) as cofactor.

It is found in the secreted. In terms of biological role, extracellular aminopeptidase that allows assimilation of proteinaceous substrates. This is Leucine aminopeptidase 1 (LAP1) from Grosmannia clavigera (strain kw1407 / UAMH 11150) (Blue stain fungus).